Here is a 232-residue protein sequence, read N- to C-terminus: DNA repair protein RecO (232 aa).

It belongs to the RecO family.

Involved in DNA repair and RecF pathway recombination. The chain is DNA repair protein RecO from Francisella tularensis subsp. novicida (strain U112).